The sequence spans 1677 residues: MAVADDTKADLLKVSILGKESIHCGFHLTPYIVQTVLTTLPSSTYVLITDDNIAKLHLNKFEEAFAKGIEKSAANPKPRFLSHVIPPGETSKSREGKARIEDFLLFHKCTRDSVILALGGGVIGDLVGFVAATFMRGVRFCQIPTTLLAMVDSSVGGKTAIDTPHGKNLIGAFWQPEYIFIDAAYLETLPTREFSNGMAEVVKTAAIWDEKEFTSLESRSAELFAAIQTPSTNYAGRTLETRSEAQKLLLSTIAASIGVKAHIVTIDERETGLRNLVNFGHSIGHAIEAVLTPTILHGECVSIGMILEAELSRQLGILTQVGVGRLTRCLKAYNLPTSLSAPLIASLPQASLLTVPRLLDIMRIDKKNSGTNKKIVLLKRIGETYEQKASIVEDKAIEKTLAEAVTVVPSIPTGNVKGSPGEVRMSTPGSKSISNRALVLAALAKGTCRLRNLLHSDDTQGAVFTWEDGGETLVVEGGEGTLTVPTPGKELYLGNAGTAARFLTTVCALAQPAPASVQPPSTNTVITGNARMKQRPIGPLVDALRANGCSIGYRESEGCLPLSIPPNSFKGGKIQLAASVSSQYVSSILLCAPYAQDANGVTLELVGGEVISQPYIDMTIAMMKTFGVEVTRRTDASGKLLDIYDIPRGTYVNPPVYNIESDASSATYPLAVAAITGTKCTIENIGSSSLQGDAKFAVEVLQKMGCEVHQTADETTVQGPPLGQLKAIEEVDMEVMTDAFLTASVLAAVANGGENKAMKITGIANQRVKECNRIRAMMDELAKFGVHTTEQELGLTIYAVPISQLKKNVSVHCYDDHRVAMAFSVLSTVVEGAIIEEKRCVEKTWPGWWDDLENKIGIKVEGVDLAGLRAESSSAGVKESKPIDNSSILLIGMRGTGKTHIGQLAAASLPGWSFVDADHYFESKLKTGVKDFVKNEGWEKFREEELAVLAELIGLGVDGKAVSSPSSYSKNHVISLGGGIVETPAARSLLKAYLAKGGRVVHITRPIDEIVRYLNVETARPAYEEPILDVWKRREPWYKECSGWEFGNVVVEAPQGQAQAANVEAGPGKTKCVKTLAGRNEVKRFFGHLAGINPNFTHGGSVEGQQRRTYFLCLTYPDVRHAFPYIDELTEGADALELRVDLLKDAKAPEAPFPSVAYVKDQVTALRRVTGLPIIYTVRTKAQGGAFPDGNAKEYKELVEAGVRLGVEYLDVEVASIFSDKEVADLSKRTKKAGSTLVIASWHDWSGKMQWDGEDVKRKYDEARKFGDLVKIVGKAEKLEDNFKLLSFVKSATSLPNSPPIIAINMSTLGQSSRILNTTFTPVSHPLLPTKAAPGQLSFKQIQQALHLLGLLPSKHFHLFGTPIAHSMSPTLHNTGFELLGLPFKYGLLESKEVDCKEVRDVISDKEGFGGASVTIPFKVDVIELLDELTESAKEIGAVNTIIPVHRSSINAQGQEETTRVLVGDNTDWVGIRVCITQRVSEGELRNENTSGLVIGAGGTARAAIYALQDLGVPVIYLFNRTKEKAEDLAKAFVGGADKKWNGQLVVLDKLGGGWGDVGVAPRVIVSTVPASATALPSASTAAIAGQVDKSTNQIVLPADVFAYTSGSAVVVDMAYKPAETPLLKLAKELKEEGNWACVQGLEVLLEQGYIQFEKWTGRRCPKEQVSTRVWEKYGEV.

Residues 1–394 (MAVADDTKAD…YEQKASIVED (394 aa)) are 3-dehydroquinate synthase. NAD(+)-binding positions include 50 to 52 (DDN), 89 to 92 (ETSK), 120 to 122 (GGV), and Asp-125. Residue Arg-136 coordinates 7-phospho-2-dehydro-3-deoxy-D-arabino-heptonate. Residue 145 to 146 (TT) participates in NAD(+) binding. Residues Asp-152 and Lys-158 each contribute to the 7-phospho-2-dehydro-3-deoxy-D-arabino-heptonate site. Lys-167 is an NAD(+) binding site. Residue Asn-168 coordinates 7-phospho-2-dehydro-3-deoxy-D-arabino-heptonate. NAD(+)-binding positions include 185–188 (YLET) and Asn-196. Glu-200 is a Zn(2+) binding site. Residues 200-203 (EVVK) and Lys-260 contribute to the 7-phospho-2-dehydro-3-deoxy-D-arabino-heptonate site. Glu-270 (proton acceptor; for 3-dehydroquinate synthase activity) is an active-site residue. 7-phospho-2-dehydro-3-deoxy-D-arabino-heptonate contacts are provided by residues 274–278 (RNLVN) and His-281. Residue His-281 participates in Zn(2+) binding. Residue His-285 is the Proton acceptor; for 3-dehydroquinate synthase activity of the active site. Residues His-297 and Lys-366 each contribute to the 7-phospho-2-dehydro-3-deoxy-D-arabino-heptonate site. His-297 contacts Zn(2+). The tract at residues 407–858 (VVPSIPTGNV…WDDLENKIGI (452 aa)) is EPSP synthase. The For EPSP synthase activity role is filled by Cys-840. Residues 885 to 1113 (NSSILLIGMR…GQQRRTYFLC (229 aa)) are shikimate kinase. Position 892-899 (892-899 (GMRGTGKT)) interacts with ATP. The tract at residues 1114-1341 (LTYPDVRHAF…AAPGQLSFKQ (228 aa)) is 3-dehydroquinase. The active-site Proton acceptor; for 3-dehydroquinate dehydratase activity is the His-1243. The active-site Schiff-base intermediate with substrate; for 3-dehydroquinate dehydratase activity is Lys-1271. The segment at 1354-1677 (SKHFHLFGTP…TRVWEKYGEV (324 aa)) is shikimate dehydrogenase.

In the N-terminal section; belongs to the sugar phosphate cyclases superfamily. Dehydroquinate synthase family. The protein in the 2nd section; belongs to the EPSP synthase family. It in the 3rd section; belongs to the shikimate kinase family. This sequence in the 4th section; belongs to the type-I 3-dehydroquinase family. In the C-terminal section; belongs to the shikimate dehydrogenase family. In terms of assembly, homodimer. Requires Zn(2+) as cofactor.

The protein resides in the cytoplasm. The enzyme catalyses 7-phospho-2-dehydro-3-deoxy-D-arabino-heptonate = 3-dehydroquinate + phosphate. The catalysed reaction is 3-dehydroquinate = 3-dehydroshikimate + H2O. It catalyses the reaction shikimate + NADP(+) = 3-dehydroshikimate + NADPH + H(+). It carries out the reaction shikimate + ATP = 3-phosphoshikimate + ADP + H(+). The enzyme catalyses 3-phosphoshikimate + phosphoenolpyruvate = 5-O-(1-carboxyvinyl)-3-phosphoshikimate + phosphate. It functions in the pathway metabolic intermediate biosynthesis; chorismate biosynthesis; chorismate from D-erythrose 4-phosphate and phosphoenolpyruvate: step 2/7. The protein operates within metabolic intermediate biosynthesis; chorismate biosynthesis; chorismate from D-erythrose 4-phosphate and phosphoenolpyruvate: step 3/7. Its pathway is metabolic intermediate biosynthesis; chorismate biosynthesis; chorismate from D-erythrose 4-phosphate and phosphoenolpyruvate: step 4/7. It participates in metabolic intermediate biosynthesis; chorismate biosynthesis; chorismate from D-erythrose 4-phosphate and phosphoenolpyruvate: step 5/7. It functions in the pathway metabolic intermediate biosynthesis; chorismate biosynthesis; chorismate from D-erythrose 4-phosphate and phosphoenolpyruvate: step 6/7. Functionally, the AROM polypeptide catalyzes 5 consecutive enzymatic reactions in prechorismate polyaromatic amino acid biosynthesis. The chain is Pentafunctional AROM polypeptide from Coprinopsis cinerea (strain Okayama-7 / 130 / ATCC MYA-4618 / FGSC 9003) (Inky cap fungus).